Reading from the N-terminus, the 96-residue chain is Putative septation protein SpoVG (96 aa).

Belongs to the SpoVG family.

In terms of biological role, essential for sporulation. Interferes with or is a negative regulator of the pathway leading to asymmetric septation. The chain is Putative septation protein SpoVG from Priestia megaterium (Bacillus megaterium).